We begin with the raw amino-acid sequence, 152 residues long: UPF0266 membrane protein YobD (152 aa).

Transmembrane regions (helical) follow at residues 6-26 (LLLI…QFIM), 45-65 (VDSV…VTSH), and 67-87 (AQMT…IFWI).

This sequence belongs to the UPF0266 family.

It is found in the cell inner membrane. The sequence is that of UPF0266 membrane protein YobD from Salmonella paratyphi C (strain RKS4594).